We begin with the raw amino-acid sequence, 342 residues long: Methionine import ATP-binding protein MetN 2 (342 aa).

The ABC transporter domain occupies 2 to 241 (ISIEGLSKVF…PKQLVTRKFV (240 aa)). 38 to 45 (GYSGAGKS) provides a ligand contact to ATP.

It belongs to the ABC transporter superfamily. Methionine importer (TC 3.A.1.24) family. The complex is composed of two ATP-binding proteins (MetN), two transmembrane proteins (MetI) and a solute-binding protein (MetQ).

It localises to the cell membrane. The catalysed reaction is L-methionine(out) + ATP + H2O = L-methionine(in) + ADP + phosphate + H(+). The enzyme catalyses D-methionine(out) + ATP + H2O = D-methionine(in) + ADP + phosphate + H(+). In terms of biological role, part of the ABC transporter complex MetNIQ involved in methionine import. Responsible for energy coupling to the transport system. The sequence is that of Methionine import ATP-binding protein MetN 2 from Oceanobacillus iheyensis (strain DSM 14371 / CIP 107618 / JCM 11309 / KCTC 3954 / HTE831).